Consider the following 380-residue polypeptide: Cytochrome b (380 aa).

Helical transmembrane passes span 34-54, 78-99, 114-134, and 179-199; these read FGSLLGICLATQILTGLLLAM, WLIRNLHANGASFFFICIYLHI, WNTGILLLLTLMATAFVGYVL, and FFALHFLLPFVIAGLTLIHLT. Positions 84 and 98 each coordinate heme b. His-183 and His-197 together coordinate heme b. Position 202 (His-202) interacts with a ubiquinone. 4 consecutive transmembrane segments (helical) span residues 227–247, 289–309, 321–341, and 348–368; these read LKDILGFMLMFLSLTTLALFS, LGGVLALAASVLMMFLSPLLH, LSQLLFWTLVANLFILTWVGS, and FIIIGQLASFTYFTILLILLP.

This sequence belongs to the cytochrome b family. The cytochrome bc1 complex contains 11 subunits: 3 respiratory subunits (MT-CYB, CYC1 and UQCRFS1), 2 core proteins (UQCRC1 and UQCRC2) and 6 low-molecular weight proteins (UQCRH/QCR6, UQCRB/QCR7, UQCRQ/QCR8, UQCR10/QCR9, UQCR11/QCR10 and a cleavage product of UQCRFS1). This cytochrome bc1 complex then forms a dimer. Heme b serves as cofactor.

It localises to the mitochondrion inner membrane. Component of the ubiquinol-cytochrome c reductase complex (complex III or cytochrome b-c1 complex) that is part of the mitochondrial respiratory chain. The b-c1 complex mediates electron transfer from ubiquinol to cytochrome c. Contributes to the generation of a proton gradient across the mitochondrial membrane that is then used for ATP synthesis. The polypeptide is Cytochrome b (MT-CYB) (Pelagodroma marina (White-faced storm-petrel)).